A 386-amino-acid chain; its full sequence is Histidinol-phosphate aminotransferase (386 aa).

Lys240 is modified (N6-(pyridoxal phosphate)lysine).

It belongs to the class-II pyridoxal-phosphate-dependent aminotransferase family. Histidinol-phosphate aminotransferase subfamily. In terms of assembly, homodimer. Requires pyridoxal 5'-phosphate as cofactor.

It catalyses the reaction L-histidinol phosphate + 2-oxoglutarate = 3-(imidazol-4-yl)-2-oxopropyl phosphate + L-glutamate. Its pathway is amino-acid biosynthesis; L-histidine biosynthesis; L-histidine from 5-phospho-alpha-D-ribose 1-diphosphate: step 7/9. The polypeptide is Histidinol-phosphate aminotransferase (Bifidobacterium longum (strain NCC 2705)).